We begin with the raw amino-acid sequence, 163 residues long: ATP synthase subunit b (163 aa).

The helical transmembrane segment at 10-29 (ALYQLLAFSVLLFFLSKFAL) threads the bilayer.

It belongs to the ATPase B chain family. In terms of assembly, F-type ATPases have 2 components, F(1) - the catalytic core - and F(0) - the membrane proton channel. F(1) has five subunits: alpha(3), beta(3), gamma(1), delta(1), epsilon(1). F(0) has three main subunits: a(1), b(2) and c(10-14). The alpha and beta chains form an alternating ring which encloses part of the gamma chain. F(1) is attached to F(0) by a central stalk formed by the gamma and epsilon chains, while a peripheral stalk is formed by the delta and b chains.

It localises to the cell membrane. Functionally, f(1)F(0) ATP synthase produces ATP from ADP in the presence of a proton or sodium gradient. F-type ATPases consist of two structural domains, F(1) containing the extramembraneous catalytic core and F(0) containing the membrane proton channel, linked together by a central stalk and a peripheral stalk. During catalysis, ATP synthesis in the catalytic domain of F(1) is coupled via a rotary mechanism of the central stalk subunits to proton translocation. Its function is as follows. Component of the F(0) channel, it forms part of the peripheral stalk, linking F(1) to F(0). This chain is ATP synthase subunit b, found in Alkalihalophilus pseudofirmus (strain ATCC BAA-2126 / JCM 17055 / OF4) (Bacillus pseudofirmus).